The chain runs to 201 residues: 3-isopropylmalate dehydratase small subunit (201 aa).

It belongs to the LeuD family. LeuD type 1 subfamily. As to quaternary structure, heterodimer of LeuC and LeuD.

The catalysed reaction is (2R,3S)-3-isopropylmalate = (2S)-2-isopropylmalate. It functions in the pathway amino-acid biosynthesis; L-leucine biosynthesis; L-leucine from 3-methyl-2-oxobutanoate: step 2/4. Catalyzes the isomerization between 2-isopropylmalate and 3-isopropylmalate, via the formation of 2-isopropylmaleate. The polypeptide is 3-isopropylmalate dehydratase small subunit (Shewanella oneidensis (strain ATCC 700550 / JCM 31522 / CIP 106686 / LMG 19005 / NCIMB 14063 / MR-1)).